The following is a 137-amino-acid chain: Large ribosomal subunit protein uL14 (137 aa).

This sequence belongs to the universal ribosomal protein uL14 family. As to quaternary structure, component of the large ribosomal subunit. Mature ribosomes consist of a small (40S) and a large (60S) subunit. The 40S subunit contains about 32 different proteins and 1 molecule of RNA (18S). The 60S subunit contains 45 different proteins and 3 molecules of RNA (25S, 5.8S and 5S).

The protein localises to the cytoplasm. Its function is as follows. Component of the ribosome, a large ribonucleoprotein complex responsible for the synthesis of proteins in the cell. The small ribosomal subunit (SSU) binds messenger RNAs (mRNAs) and translates the encoded message by selecting cognate aminoacyl-transfer RNA (tRNA) molecules. The large subunit (LSU) contains the ribosomal catalytic site termed the peptidyl transferase center (PTC), which catalyzes the formation of peptide bonds, thereby polymerizing the amino acids delivered by tRNAs into a polypeptide chain. The nascent polypeptides leave the ribosome through a tunnel in the LSU and interact with protein factors that function in enzymatic processing, targeting, and the membrane insertion of nascent chains at the exit of the ribosomal tunnel. This Candida albicans (strain SC5314 / ATCC MYA-2876) (Yeast) protein is Large ribosomal subunit protein uL14.